The following is a 146-amino-acid chain: MGLTAHEKQLITGSWGKINAKAIGKEALGRLLNTFPWTQRYFSSFGNLGSAEAIFHNEAVAAHGEKVVTSVGEAIKHMDDIKGYYAELSKYHSETLHVDPNNFKRFGGCLSITLGHHFGEEYTPELHAAYEHLFDAIADALGKGYH.

The region spanning 2 to 146 is the Globin domain; that stretch reads GLTAHEKQLI…IADALGKGYH (145 aa). Heme b contacts are provided by histidine 63 and histidine 92.

The protein belongs to the globin family. In terms of assembly, heterotetramer of two alpha chains and two beta chains. Red blood cells.

Functionally, involved in oxygen transport from the lung to the various peripheral tissues. In Xenopus borealis (Kenyan clawed frog), this protein is Hemoglobin subunit beta-2 (hbb2).